A 226-amino-acid polypeptide reads, in one-letter code: Fibrillarin-like rRNA/tRNA 2'-O-methyltransferase (226 aa).

S-adenosyl-L-methionine is bound by residues 85 to 86, 104 to 105, 129 to 130, and 149 to 152; these read TT, EF, DA, and DVAQ.

Belongs to the methyltransferase superfamily. Fibrillarin family. In terms of assembly, interacts with nop5. Component of box C/D small ribonucleoprotein (sRNP) particles that contain rpl7ae, FlpA and nop5, plus a guide RNA.

Functionally, involved in pre-rRNA and tRNA processing. Utilizes the methyl donor S-adenosyl-L-methionine to catalyze the site-specific 2'-hydroxyl methylation of ribose moieties in rRNA and tRNA. Site specificity is provided by a guide RNA that base pairs with the substrate. Methylation occurs at a characteristic distance from the sequence involved in base pairing with the guide RNA. This Thermococcus sibiricus (strain DSM 12597 / MM 739) protein is Fibrillarin-like rRNA/tRNA 2'-O-methyltransferase.